A 113-amino-acid polypeptide reads, in one-letter code: uncharacterized protein (113 aa).

It belongs to the HesB/IscA family.

This is an uncharacterized protein from Synechocystis sp. (strain ATCC 27184 / PCC 6803 / Kazusa).